We begin with the raw amino-acid sequence, 308 residues long: MKSFFLYLYVAFMFSCITALPLPVDNKRASSDSLDLKKKYAPDPPITHNVNIGIVFTDPESSEEAGRLITIDLYGTMVPKTVMTFCQYVDSVKDRLASRHSYSPERDFDKILPNGAIEGSSVSSSSIEETEMLAPKLPEENHSLIHDRPGRVSMIKDDKGLKFIIETSETPLEGESVVFGQVTAGLKDLMDKLANVKTDENGKPEQPITIGYISSQEHRIQHAKEAHEKYLQRLQDYQNGDLEKGITLKNYLYQGSQRKLEDAKYNQLHHPLPKIMLGISVLLLFYVLAKYRKRIFNRSSKIVSIRED.

The PPIase cyclophilin-type domain occupies 56–215 (FTDPESSEEA…QPITIGYISS (160 aa)).

The enzyme catalyses [protein]-peptidylproline (omega=180) = [protein]-peptidylproline (omega=0). Functionally, PPIases accelerate the folding of proteins. It catalyzes the cis-trans isomerization of proline imidic peptide bonds in oligopeptides. The protein is Peptidyl-prolyl cis-trans isomerase CYP8 (CPR8) of Saccharomyces cerevisiae (strain ATCC 204508 / S288c) (Baker's yeast).